Consider the following 290-residue polypeptide: HTH-type transcriptional regulator BsdA (290 aa).

Positions 1 to 59 (MDIRQLRYFITIAQEQKITSAAKKLHMAQPPLSRQLKQLEDELGVVLFDRNKKKQMTLT) constitute an HTH lysR-type domain. Residues 18–37 (ITSAAKKLHMAQPPLSRQLK) constitute a DNA-binding region (H-T-H motif).

The protein belongs to the LysR transcriptional regulatory family.

Its function is as follows. Could be a positive regulator of bsdBCD expression in response to salicylic acid. In Bacillus subtilis (strain 168), this protein is HTH-type transcriptional regulator BsdA (bsdA).